We begin with the raw amino-acid sequence, 796 residues long: Peroxisome proliferator-activated receptor gamma coactivator 1-alpha (796 aa).

K77 is subject to N6-acetyllysine. Residues 98–138 are disordered; the sequence is PVDEDGLPSFDALTDGDVTTENEASPSSMPDGTPPPQEAEE. The segment covering 114–127 has biased composition (polar residues); that stretch reads DVTTENEASPSSMP. The LXXLL motif motif lies at 142-146; that stretch reads LKKLL. K144 is subject to N6-acetyllysine. The residue at position 176 (T176) is a Phosphothreonine; by AMPK. K182 carries the N6-acetyllysine modification. Residues 211-274 form a disordered region; it reads YLTTNDDPPH…PNDPKGSPFE (64 aa). A compositionally biased stretch (basic and acidic residues) spans 217-235; that stretch reads DPPHTKPTETRNSSRDKCT. Positions 242-258 are enriched in polar residues; that stretch reads TQSQSQHLQAKPTSLSL. N6-acetyllysine occurs at positions 252, 269, 276, and 319. Residues 288–349 are disordered; sequence GTAGLTPPTT…NNSTKKGPEQ (62 aa). The segment at 291 to 337 is interaction with PPARG; the sequence is GLTPPTTPPHKANQDNPFRASPKLKPPCKTVVPPPSKKTRYSESSGT. Residues 332–344 are compositionally biased toward polar residues; that stretch reads SESSGTHGNNSTK. N6-acetyllysine is present on residues K345, K411, and K449. The mediates interaction with RNF34 stretch occupies residues 348 to 796; that stretch reads EQSELYAQLS…LKEAQRSLRR (449 aa). Positions 463 to 487 are disordered; it reads HFGHPSQAVFDDEADKTSELRDSDF. Over residues 477-486 the composition is skewed to basic and acidic residues; sequence DKTSELRDSD. S537 is modified (phosphoserine; by AMPK). 2 disordered regions span residues 541–637 and 648–667; these read FNSP…SYEE and YRRE…ERQR. The segment covering 568–603 has biased composition (low complexity); sequence RSFSQHRSCSRSPYSRSRSRSPGSRSSSRSCYYSES. Basic residues predominate over residues 620-629; that stretch reads SRSRSPYSRR. An RRM domain is found at 675–751; the sequence is RVIYVGKIRP…TDFELYFCGR (77 aa). N6-acetyllysine is present on residues K756 and K777.

In terms of assembly, homooligomer. Interacts with MYBBP1A; inhibits MYBBP1A transcriptional activation. Interacts with PRDM16, LPIN1 and PML. Interacts (via LXXLL motif) with RORA and RORC (via AF-2 motif); activates RORA and RORC transcriptional activation. Interacts with LRPPRC. Interacts with FOXO1. Interacts with NR5A2. Post-translationally, phosphorylation by AMPK in skeletal muscle increases activation of its own promoter. Phosphorylated by CLK2. Heavily acetylated by KAT2A/GCN5 under conditions of high nutrients, leading to inactivation of PPARGC1A. Deacetylated by SIRT1 in low nutrients/high NAD conditions, leading to its activation. In terms of processing, ubiquitinated. Ubiquitination by RNF34 induces proteasomal degradation.

The protein resides in the nucleus. It is found in the PML body. Transcriptional coactivator for steroid receptors and nuclear receptors. Greatly increases the transcriptional activity of PPARG and thyroid hormone receptor on the uncoupling protein promoter. Can regulate key mitochondrial genes that contribute to the program of adaptive thermogenesis. Plays an essential role in metabolic reprogramming in response to dietary availability through coordination of the expression of a wide array of genes involved in glucose and fatty acid metabolism. Acts as a key regulator of gluconeogenesis: stimulates hepatic gluconeogenesis by increasing the expression of gluconeogenic enzymes, and acting together with FOXO1 to promote the fasting gluconeogenic program. Induces the expression of PERM1 in the skeletal muscle in an ESRRA-dependent manner. Also involved in the integration of the circadian rhythms and energy metabolism. Required for oscillatory expression of clock genes, such as BMAL1 and NR1D1, through the coactivation of RORA and RORC, and metabolic genes, such as PDK4 and PEPCK. The sequence is that of Peroxisome proliferator-activated receptor gamma coactivator 1-alpha (PPARGC1A) from Sus scrofa (Pig).